The sequence spans 347 residues: Histone deacetylase 11 (347 aa).

The interval 14 to 318 (TRWPIVYSPR…ARIIADSILN (305 aa)) is histone deacetylase. The active site involves H143.

This sequence belongs to the histone deacetylase family. In terms of assembly, interacts with HDAC6.

Its subcellular location is the nucleus. It carries out the reaction N(6)-acetyl-L-lysyl-[histone] + H2O = L-lysyl-[histone] + acetate. Its function is as follows. Responsible for the deacetylation of lysine residues on the N-terminal part of the core histones (H2A, H2B, H3 and H4). Histone deacetylation gives a tag for epigenetic repression and plays an important role in transcriptional regulation, cell cycle progression and developmental events. Histone deacetylases act via the formation of large multiprotein complexes. The chain is Histone deacetylase 11 (HDAC11) from Macaca fascicularis (Crab-eating macaque).